Reading from the N-terminus, the 282-residue chain is MERNVILAKNAGFCFGVKRAVDEAIKYQKEFGKKIYTLGPLIHNNDVVNYLEDNDIFAIELSDADSLKKGDVVLIRSHGVKESVIKDLTDKGLIVKNATCPYVTNIQLKVKKCYEQGYKIIIVGDENHPEVIGINGWCNDSAIITNGKTELENIPAKVCVVSQTTEKKETWNKVLNEIVRASKEIVAFNTICSATDVRQKSVQELSKEADLVFVIGGKNSSNTTKLYEICKKECPKSYHIENVKELDESLLEDESVKTIGITAGASTPDWIINEVISKIKEL.

A [4Fe-4S] cluster-binding site is contributed by Cys14. Positions 43 and 78 each coordinate (2E)-4-hydroxy-3-methylbut-2-enyl diphosphate. Residues His43 and His78 each coordinate dimethylallyl diphosphate. Residues His43 and His78 each coordinate isopentenyl diphosphate. [4Fe-4S] cluster is bound at residue Cys100. His128 contacts (2E)-4-hydroxy-3-methylbut-2-enyl diphosphate. A dimethylallyl diphosphate-binding site is contributed by His128. His128 contacts isopentenyl diphosphate. The active-site Proton donor is Glu130. (2E)-4-hydroxy-3-methylbut-2-enyl diphosphate is bound at residue Thr164. Position 192 (Cys192) interacts with [4Fe-4S] cluster. (2E)-4-hydroxy-3-methylbut-2-enyl diphosphate contacts are provided by Ser220, Ser221, Asn222, and Ser266. The dimethylallyl diphosphate site is built by Ser220, Ser221, Asn222, and Ser266. Residues Ser220, Ser221, Asn222, and Ser266 each coordinate isopentenyl diphosphate.

The protein belongs to the IspH family. [4Fe-4S] cluster serves as cofactor.

It catalyses the reaction isopentenyl diphosphate + 2 oxidized [2Fe-2S]-[ferredoxin] + H2O = (2E)-4-hydroxy-3-methylbut-2-enyl diphosphate + 2 reduced [2Fe-2S]-[ferredoxin] + 2 H(+). The enzyme catalyses dimethylallyl diphosphate + 2 oxidized [2Fe-2S]-[ferredoxin] + H2O = (2E)-4-hydroxy-3-methylbut-2-enyl diphosphate + 2 reduced [2Fe-2S]-[ferredoxin] + 2 H(+). It functions in the pathway isoprenoid biosynthesis; dimethylallyl diphosphate biosynthesis; dimethylallyl diphosphate from (2E)-4-hydroxy-3-methylbutenyl diphosphate: step 1/1. Its pathway is isoprenoid biosynthesis; isopentenyl diphosphate biosynthesis via DXP pathway; isopentenyl diphosphate from 1-deoxy-D-xylulose 5-phosphate: step 6/6. In terms of biological role, catalyzes the conversion of 1-hydroxy-2-methyl-2-(E)-butenyl 4-diphosphate (HMBPP) into a mixture of isopentenyl diphosphate (IPP) and dimethylallyl diphosphate (DMAPP). Acts in the terminal step of the DOXP/MEP pathway for isoprenoid precursor biosynthesis. The sequence is that of 4-hydroxy-3-methylbut-2-enyl diphosphate reductase from Clostridium perfringens (strain ATCC 13124 / DSM 756 / JCM 1290 / NCIMB 6125 / NCTC 8237 / Type A).